The following is a 372-amino-acid chain: Beta sliding clamp (372 aa).

The protein belongs to the beta sliding clamp family. As to quaternary structure, forms a ring-shaped head-to-tail homodimer around DNA which binds and tethers DNA polymerases and other proteins to the DNA. The DNA replisome complex has a single clamp-loading complex (3 tau and 1 each of delta, delta', psi and chi subunits) which binds 3 Pol III cores (1 core on the leading strand and 2 on the lagging strand) each with a beta sliding clamp dimer. Additional proteins in the replisome are other copies of gamma, psi and chi, Ssb, DNA helicase and RNA primase.

Its subcellular location is the cytoplasm. Functionally, confers DNA tethering and processivity to DNA polymerases and other proteins. Acts as a clamp, forming a ring around DNA (a reaction catalyzed by the clamp-loading complex) which diffuses in an ATP-independent manner freely and bidirectionally along dsDNA. Initially characterized for its ability to contact the catalytic subunit of DNA polymerase III (Pol III), a complex, multichain enzyme responsible for most of the replicative synthesis in bacteria; Pol III exhibits 3'-5' exonuclease proofreading activity. The beta chain is required for initiation of replication as well as for processivity of DNA replication. The polypeptide is Beta sliding clamp (dnaN) (Caulobacter vibrioides (strain ATCC 19089 / CIP 103742 / CB 15) (Caulobacter crescentus)).